The primary structure comprises 322 residues: ATP-dependent 6-phosphofructokinase (322 aa).

ATP-binding positions include G12, 73–74, and 103–106; these read RF and GDGT. Residue D104 coordinates Mg(2+). 126–128 is a substrate binding site; the sequence is TID. D128 acts as the Proton acceptor in catalysis. R155 serves as a coordination point for ADP. Substrate contacts are provided by residues R163 and 170–172; that span reads MGR. ADP-binding positions include 186–188, K212, and 214–216; these read GSE and KPS. Substrate-binding positions include E223, R245, and 251 to 254; that span reads HTQR.

Belongs to the phosphofructokinase type A (PFKA) family. ATP-dependent PFK group I subfamily. Prokaryotic clade 'B1' sub-subfamily. Homotetramer. Requires Mg(2+) as cofactor.

It is found in the cytoplasm. The catalysed reaction is beta-D-fructose 6-phosphate + ATP = beta-D-fructose 1,6-bisphosphate + ADP + H(+). Its pathway is carbohydrate degradation; glycolysis; D-glyceraldehyde 3-phosphate and glycerone phosphate from D-glucose: step 3/4. Allosterically activated by ADP and other diphosphonucleosides, and allosterically inhibited by phosphoenolpyruvate. Its function is as follows. Catalyzes the phosphorylation of D-fructose 6-phosphate to fructose 1,6-bisphosphate by ATP, the first committing step of glycolysis. The chain is ATP-dependent 6-phosphofructokinase from Mesomycoplasma hyopneumoniae (strain 7448) (Mycoplasma hyopneumoniae).